The primary structure comprises 201 residues: Heat shock protein beta-1 (201 aa).

Residue Ser-15 is modified to Phosphoserine; by PKA and PKC. In terms of domain architecture, sHSP spans 83–193 (ALSRQMSSGM…SETTIPVNVE (111 aa)).

It belongs to the small heat shock protein (HSP20) family. As to quaternary structure, homooligomer. Homodimer; becomes monomeric upon activation. Heterooligomer.

The protein localises to the cytoplasm. It is found in the nucleus. It localises to the cytoskeleton. The protein resides in the spindle. Its function is as follows. Small heat shock protein which functions as a molecular chaperone probably maintaining denatured proteins in a folding-competent state. Plays a role in stress resistance and actin organization. The protein is Heat shock protein beta-1 (hspb1) of Poeciliopsis lucida (Desert topminnow).